We begin with the raw amino-acid sequence, 766 residues long: BMP/retinoic acid-inducible neural-specific protein 3 (766 aa).

The first 33 residues, 1–33, serve as a signal peptide directing secretion; it reads MIWRSRAGAELFSLMALWEWIALSLHCWVLAVA. Positions 74 to 264 constitute an MACPF domain; sequence RYKIYREFGR…FVQAALSYIA (191 aa). N-linked (GlcNAc...) asparagine glycosylation is found at asparagine 168, asparagine 337, asparagine 456, asparagine 562, asparagine 609, and asparagine 641.

It belongs to the BRINP family. As to expression, strongly expressed in oral keratinocytes compared to the weak expression in tongue squamous cell carcinoma (SCC). Expressed in endothelial and aortic smooth muscle cells. Overexpressed in gonadotropinomas compared to normal pituitarie tissues.

Its subcellular location is the secreted. It localises to the mitochondrion. Its function is as follows. Inhibits neuronal cell proliferation by negative regulation of the cell cycle transition. Promotes pituitary gonadotrope cell proliferation, migration and invasion, when overexpressed. May play a role in cell pituitary tumor development. In Homo sapiens (Human), this protein is BMP/retinoic acid-inducible neural-specific protein 3 (BRINP3).